A 309-amino-acid chain; its full sequence is MVKIYAPASIGNVSVGFDVLGAAVSPVDGTLLGDCVSVEAAAEFSLRNEGRFVSKLPADPKDNIVYQCWDRFCSAIGQRVPVAMTLEKNMPIGSGLGSSACSVVAGLMAMNEYCNRPLNNNELLILMGELEGRVSGSVHFDNVAPCFLGGMQLMLEENDIISQPVPGFNDWLWVMAYPGIKVSTAEARAILPAQYRKEEIIRHGRYLGGFIHACHTQQPLLAAKLMQDVIAEPYRTKLLPGFAQARQAAADIGALACGISGSGPTLFAVCNQPDTANRMADWLSQHYLQNDEGFVHICRLDTAGARKLG.

91 to 101 (PIGSGLGSSAC) contributes to the ATP binding site.

This sequence belongs to the GHMP kinase family. Homoserine kinase subfamily.

The protein resides in the cytoplasm. The enzyme catalyses L-homoserine + ATP = O-phospho-L-homoserine + ADP + H(+). Its pathway is amino-acid biosynthesis; L-threonine biosynthesis; L-threonine from L-aspartate: step 4/5. Catalyzes the ATP-dependent phosphorylation of L-homoserine to L-homoserine phosphate. The protein is Homoserine kinase of Erwinia tasmaniensis (strain DSM 17950 / CFBP 7177 / CIP 109463 / NCPPB 4357 / Et1/99).